The following is a 259-amino-acid chain: Thiamine thiazole synthase (259 aa).

NAD(+) contacts are provided by residues Ala33, 52 to 53 (ER), Gly60, Val124, and 152 to 154 (HVD). Positions 154 and 169 each coordinate Fe cation. Position 219 (Met219) interacts with NAD(+). Arg229 contributes to the glycine binding site.

The protein belongs to the THI4 family. As to quaternary structure, homooctamer; tetramer of dimers. Fe(2+) is required as a cofactor.

The enzyme catalyses hydrogen sulfide + glycine + NAD(+) = ADP-5-ethyl-4-methylthiazole-2-carboxylate + nicotinamide + 3 H2O + H(+). It participates in cofactor biosynthesis; thiamine diphosphate biosynthesis. Functionally, involved in the biosynthesis of the thiazole moiety of thiamine. Catalyzes the conversion of NAD and glycine to adenosine diphosphate 5-(2-hydroxyethyl)-4-methylthiazole-2-carboxylate (ADT), an adenylated thiazole intermediate, using free sulfide as a source of sulfur. The protein is Thiamine thiazole synthase of Pyrobaculum neutrophilum (strain DSM 2338 / JCM 9278 / NBRC 100436 / V24Sta) (Thermoproteus neutrophilus).